The primary structure comprises 868 residues: Homeobox-leucine zipper protein HOX29 (868 aa).

The homeobox DNA-binding region spans Asp-9–Lys-72. Residues Arg-64 to Val-106 adopt a coiled-coil conformation. The interval Val-150–Ala-171 is disordered. In terms of domain architecture, START spans Arg-169 to Ile-397.

This sequence belongs to the HD-ZIP homeobox family. Class III subfamily. In terms of tissue distribution, expressed in phloem.

The protein resides in the nucleus. Its function is as follows. Probable transcription factor that may be necessary for the proper patterning of vascular bundles. This chain is Homeobox-leucine zipper protein HOX29 (HOX29), found in Oryza sativa subsp. japonica (Rice).